Consider the following 230-residue polypeptide: 7-cyano-7-deazaguanine synthase (230 aa).

An ATP-binding site is contributed by 10–20 (LSGGLDSATTA). Positions 191, 199, 202, and 205 each coordinate Zn(2+).

It belongs to the QueC family. Zn(2+) serves as cofactor.

The catalysed reaction is 7-carboxy-7-deazaguanine + NH4(+) + ATP = 7-cyano-7-deazaguanine + ADP + phosphate + H2O + H(+). It functions in the pathway purine metabolism; 7-cyano-7-deazaguanine biosynthesis. Functionally, catalyzes the ATP-dependent conversion of 7-carboxy-7-deazaguanine (CDG) to 7-cyano-7-deazaguanine (preQ(0)). This chain is 7-cyano-7-deazaguanine synthase, found in Gloeothece citriformis (strain PCC 7424) (Cyanothece sp. (strain PCC 7424)).